Consider the following 142-residue polypeptide: Thioredoxin-like protein 4A (142 aa).

Residues C38 and C79 are joined by a disulfide bond. Phosphoserine is present on S132.

The protein belongs to the DIM1 family. Component of the precatalytic spliceosome (spliceosome B complex). Component of the U5 snRNP complex. Component of the U4/U6-U5 tri-snRNP complex. The U4/U6-U5 tri-snRNP complex is a building block of the precatalytic spliceosome (spliceosome B complex). The U4/U6-U5 tri-snRNP complex is composed of the U4, U6 and U5 snRNAs and at least PRPF3, PRPF4, PRPF6, PRPF8, PRPF31, SNRNP200, TXNL4A, SNRNP40, SNRPB, SNRPD1, SNRPD2, SNRPD3, SNRPE, SNRPF, SNRPG, DDX23, CD2BP2, PPIH, SNU13, EFTUD2, SART1 and USP39, plus LSM2, LSM3, LSM4, LSM5, LSM6, LSM7 and LSM8. Directly interacts with CD2BP2. Interacts with HNRPF, HNRPH2, NEDD9 and PQBP1. Interacts with ERBB4. In terms of processing, the disulfide bond seen in structures determined by X-ray crystallography and NMR is not essential for protein folding and function.

The protein resides in the nucleus. Functionally, plays a role in pre-mRNA splicing as component of the U5 snRNP and U4/U6-U5 tri-snRNP complexes that are involved in spliceosome assembly, and as component of the precatalytic spliceosome (spliceosome B complex). The sequence is that of Thioredoxin-like protein 4A (TXNL4A) from Homo sapiens (Human).